The following is a 221-amino-acid chain: Serine/arginine-rich splicing factor 2 (221 aa).

Position 2 is an N-acetylserine (Ser2). Ser2 carries the post-translational modification Phosphoserine. Residues 14–92 (TSLKVDNLTY…RELRVQMARY (79 aa)) enclose the RRM domain. Phosphothreonine is present on residues Thr22 and Thr25. Ser26 bears the Phosphoserine mark. Residue Lys52 is modified to N6-acetyllysine. The interval 92–221 (YGRPPDSHHS…SPEEEGAVSS (130 aa)) is disordered. 2 stretches are compositionally biased toward basic residues: residues 117–171 (RRSR…RSKS) and 179–189 (SRSRSRSRSRS). Residues Ser189, Ser191, Ser204, Ser206, Ser208, Ser212, and Ser220 each carry the phosphoserine modification. A compositionally biased stretch (acidic residues) spans 212–221 (SPEEEGAVSS).

Belongs to the splicing factor SR family. In vitro, self-associates and binds SRSF1/SFRS1 (ASF/SF2), SNRP70 and U2AF1 but not U2AF2. Binds SREK1/SFRS12. Interacts with CCNL1 and CCNL2. Interacts with SCAF11. Interacts with ZRSR2/U2AF1-RS2. Interacts with CCDC55 (via C-terminus). Interacts with BRDT. Post-translationally, extensively phosphorylated on serine residues in the RS domain. Phosphorylated by SRPK2 and this causes its redistribution from the nuclear speckle to nucleoplasm and controls cell fate decision in response to cisplatin treatment. KAT5/TIP60 inhibits its phosphorylation by preventing SRPK2 nuclear translocation. In terms of processing, acetylation on Lys-52 by KAT5/TIP60 promotes its proteasomal degradation. This effect is counterbalanced by HDAC6, which positively controls SRSF2 protein level by deacetylating it and preventing its proteasomal degradation.

The protein localises to the nucleus. It is found in the nucleoplasm. It localises to the nucleus speckle. Its function is as follows. Necessary for the splicing of pre-mRNA. It is required for formation of the earliest ATP-dependent splicing complex and interacts with spliceosomal components bound to both the 5'- and 3'-splice sites during spliceosome assembly. It also is required for ATP-dependent interactions of both U1 and U2 snRNPs with pre-mRNA. Interacts with other spliceosomal components, via the RS domains, to form a bridge between the 5'- and 3'-splice site binding components, U1 snRNP and U2AF. Binds to purine-rich RNA sequences, either 5'-AGSAGAGTA-3' (S=C or G) or 5'-GTTCGAGTA-3'. Can bind to beta-globin mRNA and commit it to the splicing pathway. The phosphorylated form (by SRPK2) is required for cellular apoptosis in response to cisplatin treatment. The chain is Serine/arginine-rich splicing factor 2 (SRSF2) from Pan troglodytes (Chimpanzee).